The following is a 32-amino-acid chain: MEAITYTFILFLTLGLLFFAVAFRETPRITKK.

The chain crosses the membrane as a helical span at residues 3 to 23; that stretch reads AITYTFILFLTLGLLFFAVAF.

This sequence belongs to the PsbT family. In terms of assembly, PSII is composed of 1 copy each of membrane proteins PsbA, PsbB, PsbC, PsbD, PsbE, PsbF, PsbH, PsbI, PsbJ, PsbK, PsbL, PsbM, PsbT, PsbX, PsbY, PsbZ, Psb30/Ycf12, peripheral proteins PsbO, CyanoQ (PsbQ), PsbU, PsbV and a large number of cofactors. It forms dimeric complexes.

The protein localises to the cellular thylakoid membrane. Its function is as follows. Found at the monomer-monomer interface of the photosystem II (PS II) dimer, plays a role in assembly and dimerization of PSII. PSII is a light-driven water plastoquinone oxidoreductase, using light energy to abstract electrons from H(2)O, generating a proton gradient subsequently used for ATP formation. In Synechococcus sp. (strain JA-2-3B'a(2-13)) (Cyanobacteria bacterium Yellowstone B-Prime), this protein is Photosystem II reaction center protein T.